Reading from the N-terminus, the 99-residue chain is Protein Frey (99 aa).

A helical transmembrane segment spans residues 10–29 (YPRAGLSLFLFYLILAGALL). The tract at residues 60–90 (DYGLRPKHPRPGGPRPLLSQAQQRKRDGPNM) is disordered.

As to quaternary structure, interacts with SPPL2C (via active sites); the interaction stabilizes FREY1 protein and inhibits SPPL2C proteolytic activity. Interacts with IZUMO1; the interaction retains IZUMO1 at the endoplasmic reticulum membrane and coordinates IZUMO1 complex assembly. As to expression, expressed in round spermatids (at protein level).

It is found in the endoplasmic reticulum membrane. Functionally, key regulator for male fertility expressed transiently in round spermatids where it recruits IZUMO1 at the endoplasmic reticulum (ER) membrane and coordinates the oolemmal binding multimeric complex (IZUMO1 complex) assembly. Upon complete assembly of the IZUMO1 complex, its ER retention is released, facilitating IZUMO1 complex export to the acrosome. Through the interaction with SPPL2C, inhibits its intramembrane protease activity directly accessing the catalytic center of an I-CLiP. The polypeptide is Protein Frey (Mus musculus (Mouse)).